Here is a 358-residue protein sequence, read N- to C-terminus: Sulfoquinovosyl glycerol transport ATP-binding protein SmoE (358 aa).

Residues 4–234 enclose the ABC transporter domain; sequence VSLRKLDKSY…PESVFVGGFV (231 aa). ATP is bound at residue 36–43; it reads GPSGCGKS.

Belongs to the ABC transporter superfamily. The complex is probably composed of two ATP-binding proteins (SmoE), two transmembrane proteins (SmoG and SmoH) and a solute-binding protein (SmoF).

It is found in the cell inner membrane. Functionally, part of the ABC transporter complex SmoEFGH involved in sulfoquinovosyl glycerol (SQGro) uptake. Responsible for energy coupling to the transport system. The protein is Sulfoquinovosyl glycerol transport ATP-binding protein SmoE of Agrobacterium fabrum (strain C58 / ATCC 33970) (Agrobacterium tumefaciens (strain C58)).